The primary structure comprises 228 residues: Ribonuclease 3 (228 aa).

Residues Leu8–Asp130 form the RNase III domain. Residue Glu43 participates in Mg(2+) binding. Asp47 is a catalytic residue. Asp116 and Glu119 together coordinate Mg(2+). Glu119 is a catalytic residue. A DRBM domain is found at Asp157–Gly226.

The protein belongs to the ribonuclease III family. Homodimer. Mg(2+) serves as cofactor.

The protein resides in the cytoplasm. It catalyses the reaction Endonucleolytic cleavage to 5'-phosphomonoester.. Functionally, digests double-stranded RNA. Involved in the processing of primary rRNA transcript to yield the immediate precursors to the large and small rRNAs (23S and 16S). Processes some mRNAs, and tRNAs when they are encoded in the rRNA operon. Processes pre-crRNA and tracrRNA of type II CRISPR loci if present in the organism. The protein is Ribonuclease 3 of Psychromonas ingrahamii (strain DSM 17664 / CCUG 51855 / 37).